A 374-amino-acid polypeptide reads, in one-letter code: RNA binding protein fox-1 homolog 3 (374 aa).

The span at 1–29 (MAQPYPPAQYPPPPQNGIPAEYAPPPPHP) shows a compositional bias: pro residues. The disordered stretch occupies residues 1–105 (MAQPYPPAQY…QQPKRLHVSN (105 aa)). Polar residues predominate over residues 49-74 (TPAQTHPEQPGTEASTQPIAGTQTVP). Residues 99–175 (KRLHVSNIPF…RKIEVNNATA (77 aa)) form the RRM domain. Position 223 is an asymmetric dimethylarginine; alternate (arginine 223). An Omega-N-methylarginine; alternate modification is found at arginine 223. Arginine 319 is subject to Asymmetric dimethylarginine.

In terms of processing, phosphorylated. In terms of tissue distribution, widely expressed in brain, including in cerebral cortex, hippocampus, thalamus, caudate/putamen, cerebellum, as well as in the spinal cord (at protein level). Not expressed in all neuronal cells within a region, in cerebellum, expression is absent in Purkinje cells (at protein level). Expressed in the retina in the ganglion cells and some cells in the inner nuclear layer, but absent from the photoreceptor cells and most cells in the inner nuclear layer (at protein level).

The protein localises to the nucleus. It is found in the cytoplasm. Pre-mRNA alternative splicing regulator. Regulates alternative splicing of RBFOX2 to enhance the production of mRNA species that are targeted for nonsense-mediated decay (NMD). In Mus musculus (Mouse), this protein is RNA binding protein fox-1 homolog 3 (Rbfox3).